We begin with the raw amino-acid sequence, 1068 residues long: Phosphatidylinositol 4,5-bisphosphate 3-kinase catalytic subunit alpha isoform (1068 aa).

The PI3K-ABD domain occupies 16–105; the sequence is MPPRILVECL…QPFLKVIEPV (90 aa). In terms of domain architecture, PI3K-RBD spans 187 to 289; that stretch reads KGQIIVVIWV…GRMPNLMLMA (103 aa). In terms of domain architecture, C2 PI3K-type spans 330 to 487; it reads INSALRIKIL…DWFSSVVKFP (158 aa). A PIK helical domain is found at 517–694; sequence LARDNELREN…GLLLESYCRA (178 aa). A PI3K/PI4K catalytic domain is found at 765-1051; it reads RLEECRIMSS…QMNDAHHGGW (287 aa). The segment at 771–777 is G-loop; it reads IMSSAKR. A catalytic loop region spans residues 912–920; the sequence is GIGDRHNSN. The segment at 931–957 is activation loop; the sequence is HIDFGHFLDHKKKKFGYKRERVPFVLT.

It belongs to the PI3/PI4-kinase family. In terms of assembly, heterodimer of a catalytic subunit PIK3CA and a p85 regulatory subunit (PIK3R1, PIK3R2 or PIK3R3). Interacts with IRS1 in nuclear extracts. Interacts with RUFY3. Interacts with RASD2. Interacts with APPL1. Interacts with HRAS and KRAS. Interaction with HRAS/KRAS is required for PI3K pathway signaling and cell proliferation stimulated by EGF and FGF2. Interacts with FAM83B; activates the PI3K/AKT signaling cascade.

It carries out the reaction a 1,2-diacyl-sn-glycero-3-phospho-(1D-myo-inositol-4,5-bisphosphate) + ATP = a 1,2-diacyl-sn-glycero-3-phospho-(1D-myo-inositol-3,4,5-trisphosphate) + ADP + H(+). The enzyme catalyses a 1,2-diacyl-sn-glycero-3-phospho-(1D-myo-inositol) + ATP = a 1,2-diacyl-sn-glycero-3-phospho-(1D-myo-inositol-3-phosphate) + ADP + H(+). It catalyses the reaction L-seryl-[protein] + ATP = O-phospho-L-seryl-[protein] + ADP + H(+). The catalysed reaction is 1,2-dioctanoyl-sn-glycero-3-phospho-(1D-myo-inositol-4,5-bisphosphate) + ATP = 1,2-dioctanoyl-sn-glycero-3-phospho-(1D-myo-inositol-3,4,5-trisphosphate) + ADP + H(+). It carries out the reaction 1-octadecanoyl-2-(5Z,8Z,11Z,14Z)-eicosatetraenoyl-sn-glycero-3-phospho-1D-myo-inositol 4,5-bisphosphate + ATP = 1-octadecanoyl-2-(5Z,8Z,11Z,14Z-eicosatetraenoyl)-sn-glycero-3-phospho-(1D-myo-inositol 3,4,5-triphosphate) + ADP + H(+). It participates in phospholipid metabolism; phosphatidylinositol phosphate biosynthesis. Phosphoinositide-3-kinase (PI3K) phosphorylates phosphatidylinositol (PI) and its phosphorylated derivatives at position 3 of the inositol ring to produce 3-phosphoinositides. Uses ATP and PtdIns(4,5)P2 (phosphatidylinositol 4,5-bisphosphate) to generate phosphatidylinositol 3,4,5-trisphosphate (PIP3). PIP3 plays a key role by recruiting PH domain-containing proteins to the membrane, including AKT1 and PDPK1, activating signaling cascades involved in cell growth, survival, proliferation, motility and morphology. Participates in cellular signaling in response to various growth factors. Involved in the activation of AKT1 upon stimulation by receptor tyrosine kinases ligands such as EGF, insulin, IGF1, VEGFA and PDGF. Involved in signaling via insulin-receptor substrate (IRS) proteins. Essential in endothelial cell migration during vascular development through VEGFA signaling, possibly by regulating RhoA activity. Required for lymphatic vasculature development, possibly by binding to RAS and by activation by EGF and FGF2, but not by PDGF. Regulates invadopodia formation through the PDPK1-AKT1 pathway. Participates in cardiomyogenesis in embryonic stem cells through a AKT1 pathway. Participates in vasculogenesis in embryonic stem cells through PDK1 and protein kinase C pathway. In addition to its lipid kinase activity, it displays a serine-protein kinase activity that results in the autophosphorylation of the p85alpha regulatory subunit as well as phosphorylation of other proteins such as 4EBP1, H-Ras, the IL-3 beta c receptor and possibly others. Plays a role in the positive regulation of phagocytosis and pinocytosis. This Homo sapiens (Human) protein is Phosphatidylinositol 4,5-bisphosphate 3-kinase catalytic subunit alpha isoform (PIK3CA).